Here is a 158-residue protein sequence, read N- to C-terminus: MTTIPITKRGAEKLKQELHHLKTVERPSVITAIAEARAQGDLSENADYDAAKDRQGFVEGRIQEIEGKLSVAQVIDPGEVDGGGKVVFGATVQLEDEESGDTVTYQIVGEDEADLKQGLINISSPIARALIGKEEGDTAEVQAPSGIRRYEVVAVSYR.

Belongs to the GreA/GreB family.

Functionally, necessary for efficient RNA polymerase transcription elongation past template-encoded arresting sites. The arresting sites in DNA have the property of trapping a certain fraction of elongating RNA polymerases that pass through, resulting in locked ternary complexes. Cleavage of the nascent transcript by cleavage factors such as GreA or GreB allows the resumption of elongation from the new 3'terminus. GreA releases sequences of 2 to 3 nucleotides. The sequence is that of Transcription elongation factor GreA from Verminephrobacter eiseniae (strain EF01-2).